Here is a 554-residue protein sequence, read N- to C-terminus: CTP synthase (554 aa).

The segment at 1-265 (MTPLIFVTGG…DEIVIDQFKL (265 aa)) is amidoligase domain. Ser13 contacts CTP. Ser13 serves as a coordination point for UTP. ATP is bound by residues 14–19 (SLGKGI) and Asp71. Asp71 and Glu139 together coordinate Mg(2+). CTP is bound by residues 146–148 (DIE), 186–191 (KTKPTQ), and Lys222. Residues 186–191 (KTKPTQ) and Lys222 contribute to the UTP site. The 254-residue stretch at 292-545 (TIAVVGKYVD…VKAARARKAG (254 aa)) folds into the Glutamine amidotransferase type-1 domain. Gly353 is an L-glutamine binding site. The active-site Nucleophile; for glutamine hydrolysis is Cys380. L-glutamine contacts are provided by residues 381-384 (YGMQ), Glu404, and Arg471. Residues His518 and Glu520 contribute to the active site.

Belongs to the CTP synthase family. As to quaternary structure, homotetramer.

It carries out the reaction UTP + L-glutamine + ATP + H2O = CTP + L-glutamate + ADP + phosphate + 2 H(+). The enzyme catalyses L-glutamine + H2O = L-glutamate + NH4(+). It catalyses the reaction UTP + NH4(+) + ATP = CTP + ADP + phosphate + 2 H(+). It functions in the pathway pyrimidine metabolism; CTP biosynthesis via de novo pathway; CTP from UDP: step 2/2. Allosterically activated by GTP, when glutamine is the substrate; GTP has no effect on the reaction when ammonia is the substrate. The allosteric effector GTP functions by stabilizing the protein conformation that binds the tetrahedral intermediate(s) formed during glutamine hydrolysis. Inhibited by the product CTP, via allosteric rather than competitive inhibition. Catalyzes the ATP-dependent amination of UTP to CTP with either L-glutamine or ammonia as the source of nitrogen. Regulates intracellular CTP levels through interactions with the four ribonucleotide triphosphates. The chain is CTP synthase from Xylella fastidiosa (strain 9a5c).